The primary structure comprises 117 residues: Immunoglobulin lambda variable 7-43 (117 aa).

Residues 1–19 (MAWTPLFLFLLTCCPGSNS) form the signal peptide. Residues 20-44 (QTVVTQEPSLTVSPGGTVTLTCASS) form a framework-1 region. Residues 20–117 (QTVVTQEPSL…YCLLYYGGAQ (98 aa)) enclose the Ig-like domain. A disulfide bridge connects residues C41 and C109. The interval 45 to 53 (TGAVTSGYY) is complementarity-determining-1. The segment at 54–70 (PNWFQQKPGQAPRALIY) is framework-2. The segment at 71–73 (STS) is complementarity-determining-2. Residues 74–109 (NKHSWTPARFSGSLLGGKAALTLSGVQPEDEAEYYC) form a framework-3 region. The tract at residues 110–117 (LLYYGGAQ) is complementarity-determining-3.

In terms of assembly, immunoglobulins are composed of two identical heavy chains and two identical light chains; disulfide-linked.

The protein localises to the secreted. It is found in the cell membrane. In terms of biological role, v region of the variable domain of immunoglobulin light chains that participates in the antigen recognition. Immunoglobulins, also known as antibodies, are membrane-bound or secreted glycoproteins produced by B lymphocytes. In the recognition phase of humoral immunity, the membrane-bound immunoglobulins serve as receptors which, upon binding of a specific antigen, trigger the clonal expansion and differentiation of B lymphocytes into immunoglobulins-secreting plasma cells. Secreted immunoglobulins mediate the effector phase of humoral immunity, which results in the elimination of bound antigens. The antigen binding site is formed by the variable domain of one heavy chain, together with that of its associated light chain. Thus, each immunoglobulin has two antigen binding sites with remarkable affinity for a particular antigen. The variable domains are assembled by a process called V-(D)-J rearrangement and can then be subjected to somatic hypermutations which, after exposure to antigen and selection, allow affinity maturation for a particular antigen. The polypeptide is Immunoglobulin lambda variable 7-43 (Homo sapiens (Human)).